The sequence spans 512 residues: Solute carrier family 2, facilitated glucose transporter member 7 (512 aa).

The Cytoplasmic segment spans residues methionine 1 to proline 21. A helical membrane pass occupies residues threonine 22–leucine 42. The Extracellular portion of the chain corresponds to serine 43 to serine 78. Asparagine 57 carries an N-linked (GlcNAc...) asparagine glycan. A helical membrane pass occupies residues cysteine 79–valine 99. At aspartate 100 to threonine 107 the chain is on the cytoplasmic side. Residues leucine 108 to alanine 128 traverse the membrane as a helical segment. Residues lysine 129–arginine 138 lie on the Extracellular side of the membrane. Residues valine 139–leucine 159 form a helical membrane-spanning segment. Residues alanine 160–threonine 172 lie on the Cytoplasmic side of the membrane. A helical membrane pass occupies residues glutamate 173–glycine 193. Topologically, residues asparagine 194–tryptophan 198 are extracellular. The helical transmembrane segment at proline 199 to phenylalanine 219 threads the bilayer. At proline 220 to arginine 281 the chain is on the cytoplasmic side. Residues tryptophan 282–isoleucine 302 form a helical membrane-spanning segment. D-glucose contacts are provided by residues glutamine 294–glutamine 295 and asparagine 300. The Extracellular portion of the chain corresponds to asparagine 303–glutamine 321. A helical membrane pass occupies residues tyrosine 322–valine 342. Asparagine 331 is a binding site for D-glucose. Residues glutamate 343–leucine 350 lie on the Cytoplasmic side of the membrane. The helical transmembrane segment at leucine 351–phenylalanine 371 threads the bilayer. The Extracellular portion of the chain corresponds to glutamine 372–serine 379. The helical transmembrane segment at tyrosine 380–valine 400 threads the bilayer. Topologically, residues proline 401–arginine 415 are cytoplasmic. The chain crosses the membrane as a helical span at residues alanine 416–phenylalanine 436. Residues proline 437–alanine 445 lie on the Extracellular side of the membrane. A helical membrane pass occupies residues tyrosine 446–isoleucine 466. The Cytoplasmic segment spans residues proline 467–phenylalanine 512. The tract at residues glutamate 491 to phenylalanine 512 is disordered.

Belongs to the major facilitator superfamily. Sugar transporter (TC 2.A.1.1) family. Glucose transporter subfamily. As to expression, expressed in small intestine and colon. Weakly expressed in testis and prostate.

The protein localises to the cell membrane. It localises to the apical cell membrane. It catalyses the reaction D-glucose(out) = D-glucose(in). The catalysed reaction is D-fructose(out) = D-fructose(in). With respect to regulation, glucose and fructose transport are inhibited by the flavonoid apigenin. In terms of biological role, probable sugar transporter. Even if its physiological substrate is subject to discussion, it is able to transport glucose and fructose. Does not transport galactose, 2-deoxy-d-glucose and xylose. The sequence is that of Solute carrier family 2, facilitated glucose transporter member 7 from Homo sapiens (Human).